Reading from the N-terminus, the 146-residue chain is Protein SprT-like (146 aa).

The SprT-like domain occupies 6-141 (YVKTVSIEDF…GCGLCQGKLI (136 aa)). His-64 provides a ligand contact to Zn(2+). Glu-65 is an active-site residue. Zn(2+) is bound at residue His-68.

The protein belongs to the SprT family. Requires Zn(2+) as cofactor.

It localises to the cytoplasm. The sequence is that of Protein SprT-like from Streptococcus thermophilus (strain CNRZ 1066).